The primary structure comprises 158 residues: Non-secretory ribonuclease (158 aa).

Residues 1-27 form the signal peptide; that stretch reads MVPKLFTSQICVLLLFGLLSVEVSLQV. A C-linked (Man) tryptophan glycan is attached at Trp-34. The Proton acceptor role is filled by His-42. Cystine bridges form between Cys-50–Cys-110, Cys-64–Cys-121, Cys-82–Cys-136, and Cys-89–Cys-98. At Tyr-60 the chain carries 3'-nitrotyrosine. 65–69 is a substrate binding site; that stretch reads KNQNT. 3 N-linked (GlcNAc...) asparagine glycosylation sites follow: Asn-86, Asn-92, and Asn-111. His-153 functions as the Proton donor in the catalytic mechanism.

The protein belongs to the pancreatic ribonuclease family. Interacts with and forms a tight 1:1 complex with RNH1. Dimerization of two such complexes may occur.

The protein localises to the lysosome. Its subcellular location is the cytoplasmic granule. It carries out the reaction an [RNA] containing cytidine + H2O = an [RNA]-3'-cytidine-3'-phosphate + a 5'-hydroxy-ribonucleotide-3'-[RNA].. The catalysed reaction is an [RNA] containing uridine + H2O = an [RNA]-3'-uridine-3'-phosphate + a 5'-hydroxy-ribonucleotide-3'-[RNA].. In terms of biological role, this is a non-secretory ribonuclease. It is a pyrimidine specific nuclease with a slight preference for U. Cytotoxin and helminthotoxin. Possesses a wide variety of biological activities. In Saguinus oedipus (Cotton-top tamarin), this protein is Non-secretory ribonuclease (RNASE2).